Reading from the N-terminus, the 407-residue chain is Tryptophan synthase beta chain (407 aa).

N6-(pyridoxal phosphate)lysine is present on Lys86.

Belongs to the TrpB family. Tetramer of two alpha and two beta chains. The cofactor is pyridoxal 5'-phosphate.

The catalysed reaction is (1S,2R)-1-C-(indol-3-yl)glycerol 3-phosphate + L-serine = D-glyceraldehyde 3-phosphate + L-tryptophan + H2O. The protein operates within amino-acid biosynthesis; L-tryptophan biosynthesis; L-tryptophan from chorismate: step 5/5. In terms of biological role, the beta subunit is responsible for the synthesis of L-tryptophan from indole and L-serine. This Shewanella woodyi (strain ATCC 51908 / MS32) protein is Tryptophan synthase beta chain.